The primary structure comprises 457 residues: uncharacterized protein (457 aa).

Position 75 is an N6-(pyridoxal phosphate)lysine (Lys-75).

Pyridoxal 5'-phosphate serves as cofactor.

This is an uncharacterized protein from Sinorhizobium fredii (strain NBRC 101917 / NGR234).